The following is a 296-amino-acid chain: MSDTVTKVVADLNAAILQKSARAIAEVACKYSASDREKVRAQYRSTYSIEPDDHINKMLKGGDAATIVSNCWDELPVLRAKHLSKALKGSVDHRALLDLLIMCDREDWNNTVVAFTQQFRKNLPEELEKALKSTTSYRAFYTTWIKFDRAPRNNINGDALKLKEAFSKKDEQTVFDIMSTTVESEYKAIATQFEKVAGMTMIQAFAALTSGPLYWALHTAHYRNIGMNNGAAFLIHHACTADKKGDIARMTRLSPLLCDKCLNAKNYYSEFGDMGKDIVNAFKDAVEEVLKVLWRV.

Annexin repeat units follow at residues 3 to 72 (DTVT…SNCW), 74 to 146 (ELPV…TWIK), 153 to 222 (NNIN…TAHY), and 226 to 295 (GMNN…VLWR).

The protein belongs to the annexin family. Giardin subunit alpha subfamily.

The protein localises to the cytoplasm. Its subcellular location is the cytoskeleton. In terms of biological role, giardins are involved in parasite attachment to the intestinal mucosa and in the cytoskeletal disassembly and reassembly that marks the transition from infectious trophozoite to transmissible cyst. They may interact with other cytoskeletal proteins such as microtubules in the microribbons or crossbridges, to maintain the integrity of the ventral disk. The polypeptide is Giardin subunit alpha-3 (Giardia intestinalis (Giardia lamblia)).